A 271-amino-acid polypeptide reads, in one-letter code: ATP synthase subunit a (271 aa).

Helical transmembrane passes span 38 to 58 (FWTLNIDSMFFSVVLGLLFLV), 100 to 120 (LIAPLALTIFVWVFLMNLMDL), 146 to 166 (DVNITLSMALGVFILILFYSI), 220 to 240 (LIFILIAGLLPWWSQWILNVP), and 242 to 262 (AIFHILIITLQAFIFMVLTIV).

This sequence belongs to the ATPase A chain family. In terms of assembly, F-type ATPases have 2 components, CF(1) - the catalytic core - and CF(0) - the membrane proton channel. CF(1) has five subunits: alpha(3), beta(3), gamma(1), delta(1), epsilon(1). CF(0) has three main subunits: a(1), b(2) and c(9-12). The alpha and beta chains form an alternating ring which encloses part of the gamma chain. CF(1) is attached to CF(0) by a central stalk formed by the gamma and epsilon chains, while a peripheral stalk is formed by the delta and b chains.

The protein localises to the cell inner membrane. Functionally, key component of the proton channel; it plays a direct role in the translocation of protons across the membrane. This Salmonella arizonae (strain ATCC BAA-731 / CDC346-86 / RSK2980) protein is ATP synthase subunit a.